Reading from the N-terminus, the 286-residue chain is 33 kDa chaperonin (286 aa).

2 disulfide bridges follow: cysteine 225-cysteine 227 and cysteine 258-cysteine 261.

This sequence belongs to the HSP33 family. In terms of processing, under oxidizing conditions two disulfide bonds are formed involving the reactive cysteines. Under reducing conditions zinc is bound to the reactive cysteines and the protein is inactive.

The protein resides in the cytoplasm. Redox regulated molecular chaperone. Protects both thermally unfolding and oxidatively damaged proteins from irreversible aggregation. Plays an important role in the bacterial defense system toward oxidative stress. This is 33 kDa chaperonin from Shewanella sp. (strain ANA-3).